We begin with the raw amino-acid sequence, 2527 residues long: MASGSCQGCEEDEETLKKLIVRLNNVQEGKQIETLVQILEDLLVFTYSERASKLFQGKNIHVPLLIVLDSYMRVASVQQVGWSLLCKLIEVCPGTMQSLMGPQDVGNDWEVLGVHQLILKMLTVHNASVNLSVIGLKTLDLLLTSGKITLLILDEESDIFMLIFDAMHSFPANDEVQKLGCKALHVLFERVSEEQLTEFVENKDYMILLSALTNFKDEEEIVLHVLHCLHSLAIPCNNVEVLMSGNVRCYNIVVEAMKAFPMSERIQEVSCCLLHRLTLGNFFNILVLNEVHEFVVKAVQQYPENAALQISALSCLALLTETIFLNQDLEEKNENQENDDEGEEDKLFWLEACYKALTWHRKNKHVQEAACWALNNLLMYQNSLHEKIGDEDGHFPAHREVMLSMLMHSSSKEVFQASANALSTLLEQNVNFRKILLSKGIHLNVLELMQKHIHSPEVAESGCKMLNHLFEGSNTSLDIMAAVVPKILTVMKRHETSLPVQLEALRAILHFIVPGMPEESREDTEFHHKLNMVKKQCFKNDIHKLVLAALNRFIGNPGIQKCGLKVISSIVHFPDALEMLSLEGAMDSVLHTLQMYPDDQEIQCLGLSLIGYLITKKNVFIGTGHLLAKILVSSLYRFKDVAEIQTKGFQTILAILKLSASFSKLLVHHSFDLVIFHQMSSNIMEQKDQQFLNLCCKCFAKVAMDDYLKNVMLERACDQNNSIMVECLLLLGADANQAKEGSSLICQVCEKESSPKLVELLLNSGSREQDVRKALTISIGKGDSQIISLLLRRLALDVANNSICLGGFCIGKVEPSWLGPLFPDKTSNLRKQTNIASTLARMVIRYQMKSAVEEGTASGSDGNFSEDVLSKFDEWTFIPDSSMDSVFAQSDDLDSEGSEGSFLVKKKSNSISVGEFYRDAVLQRCSPNLQRHSNSLGPIFDHEDLLKRKRKILSSDDSLRSSKLQSHMRHSDSISSLASEREYITSLDLSANELRDIDALSQKCCISVHLEHLEKLELHQNALTSFPQQLCETLKSLTHLDLHSNKFTSFPSYLLKMSCIANLDVSRNDIGPSVVLDPTVKCPTLKQFNLSYNQLSFVPENLTDVVEKLEQLILEGNKISGICSPLRLKELKILNLSKNHISSLSENFLEACPKVESFSARMNFLAAMPFLPPSMTILKLSQNKFSCIPEAILNLPHLRSLDMSSNDIQYLPGPAHWKSLNLRELLFSHNQISILDLSEKAYLWSRVEKLHLSHNKLKEIPPEIGCLENLTSLDVSYNLELRSFPNEMGKLSKIWDLPLDELHLNFDFKHIGCKAKDIIRFLQQRLKKAVPYNRMKLMIVGNTGSGKTTLLQQLMKTKKSDLGMQSATVGIDVKDWPIQIRDKRKRDLVLNVWDFAGREEFYSTHPHFMTQRALYLAVYDLSKGQAEVDAMKPWLFNIKARASSSPVILVGTHLDVSDEKQRKACMSKITKELLNKRGFPAIRDYHFVNATEESDALAKLRKTIINESLNFKIRDQLVVGQLIPDCYVELEKIILSERKNVPIEFPVIDRKRLLQLVRENQLQLDENELPHAVHFLNESGVLLHFQDPALQLSDLYFVEPKWLCKIMAQILTVKVEGCPKHPKGIISRRDVEKFLSKKRKFPKNYMSQYFKLLEKFQIALPIGEEYLLVPSSLSDHRPVIELPHCENSEIIIRLYEMPYFPMGFWSRLINRLLEISPYMLSGRERALRPNRMYWRQGIYLNWSPEAYCLVGSEVLDNHPESFLKITVPSCRKGCILLGQVVDHIDSLMEEWFPGLLEIDICGEGETLLKKWALYSFNDGEEHQKILLDDLMKKAEEGDLLVNPDQPRLTIPISQIAPDLILADLPRNIMLNNDELEFEQAPEFLLGDGSFGSVYRAAYEGEEVAVKIFNKHTSLRLLRQELVVLCHLHHPSLISLLAAGIRPRMLVMELASKGSLDRLLQQDKASLTRTLQHRIALHVADGLRYLHSAMIIYRDLKPHNVLLFTLYPNAAIIAKIADYGIAQYCCRMGIKTSEGTPGFRAPEVARGNVIYNQQADVYSFGLLLYDILTTGGRIVEGLKFPNEFDELEIQGKLPDPVKEYGCAPWPMVEKLIKQCLKENPQERPTSAQVFDILNSAELVCLTRRILLPKNVIVECMVATHHNSRNASIWLGCGHTDRGQLSFLDLNTEGYTSEEVADSRILCLALVHLPVEKESWIVSGTQSGTLLVINTEDGKKRHTLEKMTDSVTCLYCNSFSKQSKQKNFLLVGTADGKLAIFEDKTVKLKGAAPLKILNIGNVSTPLMCLSESTNSTERNVMWGGCGTKIFSFSNDFTIQKLIETRTSQLFSYAAFSDSNIITVVVDTALYIAKQNSPVVEVWDKKTEKLCGLIDCVHFLREVMVKENKESKHKMSYSGRVKTLCLQKNTALWIGTGGGHILLLDLSTRRLIRVIYNFCNSVRVMMTAQLGSLKNVMLVLGYNRKNTEGTQKQKEIQSCLTVWDINLPHEVQNLEKHIEVRKELAEKMRRTSVE.

The segment at 1 to 969 (MASGSCQGCE…RSSKLQSHMR (969 aa)) is required for RAB29-mediated activation. A coiled-coil region spans residues 319–348 (LTETIFLNQDLEEKNENQENDDEGEEDKLF). 4 positions are modified to phosphoserine: S910, S935, S955, and S973. LRR repeat units lie at residues 983–1004 (YITS…SQKC), 1012–1033 (HLEK…LCET), 1036–1057 (SLTH…LLKM), 1059–1080 (CIAN…DPTV), 1084–1105 (TLKQ…LTDV), 1108–1129 (KLEQ…LRLK), 1130–1150 (ELKI…NFLE), 1156–1171 (ESFS…MPFL), 1174–1196 (SMTI…LNLP), 1197–1218 (HLRS…AHWK), 1221–1245 (NLRE…YLWS), 1246–1267 (RVEK…IGCL), and 1269–1291 (NLTS…MGKL). The residue at position 1292 (S1292) is a Phosphoserine; by autocatalysis. The 184-residue stretch at 1328–1511 (KAVPYNRMKL…KTIINESLNF (184 aa)) folds into the Roc domain. 1341-1348 (GNTGSGKT) serves as a coordination point for GTP. Phosphoserine is present on S1444. The region spanning 1546 to 1740 (PVIDRKRLLQ…RMYWRQGIYL (195 aa)) is the COR domain. Positions 1879-2138 (QAPEFLLGDG…FDILNSAELV (260 aa)) constitute a Protein kinase domain. L1885, D1887, G1888, G1891, V1893, A1904, K1906, M1947, E1948, A1950, S1954, and R1957 together coordinate ATP. The active-site Proton acceptor is the D1994. ATP is bound by residues H1998, L2001, A2016, and D2017. A GTP-binding site is contributed by 2098-2121 (EYGCAPWPMVEKLIKQCLKENPQE). WD repeat units follow at residues 2139-2183 (CLTR…SFLD), 2188-2228 (GYTS…LVIN), 2233-2276 (KKRH…AIFE), 2281-2327 (KLKG…FSFS), 2333-2377 (QKLI…EVWD), 2402-2438 (KESK…LLLD), and 2443-2497 (RLIR…TVWD). 2295–2298 (NVST) provides a ligand contact to GTP.

This sequence belongs to the protein kinase superfamily. TKL Ser/Thr protein kinase family. As to quaternary structure, homodimer. Homotetramer; when activated by GTP-bound RAB29. Interacts with PRKN, PRDX3, and TPCN2. Interacts with VPS35. Interacts (via N-terminus) with RAB29; this interaction is direct and stimulates kinase activity. Interacts (via ROC domain) with SEC16A. Interacts with APP; interaction promotes phosphorylation of 'Thr-743' of APP. Interacts with MAPT. Interacts with RAB8A, RAB10, and RAB12. Interacts (via N-terminus) with RAB32. Interacts with YWHAG; this interaction is dependent on phosphorylation of Ser-910 and either Ser-935 or Ser-1444. Interacts with SFN; this interaction is dependent on phosphorylation of Ser-910 and/or Ser-935. It depends on Mg(2+) as a cofactor. Autophosphorylated at Ser-1292; autophosphorylation is stimulated by RAB29. Phosphorylation of Ser-910 and either Ser-935 or Ser-1444 facilitates interaction with YWHAG. Phosphorylation of Ser-910 and/or Ser-935 facilitates interaction with SFN. In terms of processing, ubiquitinated by TRIM1; undergoes 'Lys-48'-linked polyubiquitination leading to proteasomal degradation. Expressed in pyramidal neurons in all cortical laminae of the visual cortex, in neurons of the substantia nigra pars compacta and caudate putamen (at protein level). Expressed in neutrophils (at protein level). Expressed in the brain. Expressed throughout the adult brain, but at a lower level than in heart and liver. Also expressed in placenta, lung, skeletal muscle, kidney and pancreas. In the brain, expressed in the cerebellum, cerebral cortex, medulla, spinal cord occipital pole, frontal lobe, temporal lobe and putamen. Expression is particularly high in brain dopaminoceptive areas.

The protein resides in the cytoplasmic vesicle. It is found in the perikaryon. The protein localises to the golgi apparatus membrane. Its subcellular location is the cell projection. It localises to the axon. The protein resides in the dendrite. It is found in the endoplasmic reticulum membrane. The protein localises to the secretory vesicle. Its subcellular location is the synaptic vesicle membrane. It localises to the endosome. The protein resides in the lysosome. It is found in the mitochondrion outer membrane. The protein localises to the cytoplasm. Its subcellular location is the cytoskeleton. It localises to the phagosome. The catalysed reaction is L-threonyl-[protein] + ATP = O-phospho-L-threonyl-[protein] + ADP + H(+). The enzyme catalyses L-seryl-[protein] + ATP = O-phospho-L-seryl-[protein] + ADP + H(+). It carries out the reaction GTP + H2O = GDP + phosphate + H(+). Its activity is regulated as follows. Kinase activity is regulated by the GTPase activity of the ROC domain. GTP-bound LRRK2 kinase activity is stimulated by RAB29. Phosphorylation of RAB10 'Thr-73' is stimulated by RAB29 and RAB32. Inhibited by small molecule inhibitor MLi-2. In terms of biological role, serine/threonine-protein kinase which phosphorylates a broad range of proteins involved in multiple processes such as neuronal plasticity, innate immunity, autophagy, and vesicle trafficking. Is a key regulator of RAB GTPases by regulating the GTP/GDP exchange and interaction partners of RABs through phosphorylation. Phosphorylates RAB3A, RAB3B, RAB3C, RAB3D, RAB5A, RAB5B, RAB5C, RAB8A, RAB8B, RAB10, RAB12, RAB29, RAB35, and RAB43. Regulates the RAB3IP-catalyzed GDP/GTP exchange for RAB8A through the phosphorylation of 'Thr-72' on RAB8A. Inhibits the interaction between RAB8A and GDI1 and/or GDI2 by phosphorylating 'Thr-72' on RAB8A. Regulates primary ciliogenesis through phosphorylation of RAB8A and RAB10, which promotes SHH signaling in the brain. Together with RAB29, plays a role in the retrograde trafficking pathway for recycling proteins, such as mannose-6-phosphate receptor (M6PR), between lysosomes and the Golgi apparatus in a retromer-dependent manner. Regulates neuronal process morphology in the intact central nervous system (CNS). Plays a role in synaptic vesicle trafficking. Plays an important role in recruiting SEC16A to endoplasmic reticulum exit sites (ERES) and in regulating ER to Golgi vesicle-mediated transport and ERES organization. Positively regulates autophagy through a calcium-dependent activation of the CaMKK/AMPK signaling pathway. The process involves activation of nicotinic acid adenine dinucleotide phosphate (NAADP) receptors, increase in lysosomal pH, and calcium release from lysosomes. Phosphorylates PRDX3. By phosphorylating APP on 'Thr-743', which promotes the production and the nuclear translocation of the APP intracellular domain (AICD), regulates dopaminergic neuron apoptosis. Acts as a positive regulator of innate immunity by mediating phosphorylation of RIPK2 downstream of NOD1 and NOD2, thereby enhancing RIPK2 activation. Independent of its kinase activity, inhibits the proteasomal degradation of MAPT, thus promoting MAPT oligomerization and secretion. In addition, has GTPase activity via its Roc domain which regulates LRRK2 kinase activity. Recruited by RAB29/RAB7L1 to overloaded lysosomes where it phosphorylates and stabilizes RAB8A and RAB10 which promote lysosomal content release and suppress lysosomal enlargement through the EHBP1 and EHBP1L1 effector proteins. This chain is Leucine-rich repeat serine/threonine-protein kinase 2 (LRRK2), found in Homo sapiens (Human).